A 480-amino-acid polypeptide reads, in one-letter code: Caspase-8 (480 aa).

Positions 1–218 are excised as a propeptide; the sequence is MDFQSCLYAI…ELCDSPREQD (218 aa). DED domains are found at residues 3–80 and 101–177; these read FQSC…NFLD and YRVM…KIED. Residues S188 and S213 each carry the phosphoserine modification. K226 is subject to N6-acetyllysine. H319 is a catalytic residue. The residue at position 336 (Y336) is a Phosphotyrosine. C362 is an active-site residue. Residues 377 to 387 constitute a propeptide that is removed on maturation; that stretch reads FEQQNHTLEVD. Phosphoserine; by CDK1 is present on S389.

Belongs to the peptidase C14A family. Heterotetramer that consists of two anti-parallel arranged heterodimers, each one formed by a 18 kDa (p18) and a 10 kDa (p10) subunit. Component of the death-induced signaling complex (DISC) composed of cell surface receptor FAS/CD95 or TNFRSF1A, adapter protein FADD and the CASP8 protease; recruitment of CASP8 to the complex is required for processing of CASP8 into the p18 and p10 subunits. Component of the AIM2 PANoptosome complex, a multiprotein complex that drives inflammatory cell death (PANoptosis). Interacts with CFLAR and PEA15. Interacts with RFFL and RNF34; negatively regulate CASP8 through proteasomal degradation. Interacts with TNFAIP8L2. Interacts with CASP8AP2. Interacts with NOL3; decreases CASP8 activity in a mitochondria localization- and phosphorylation-dependent manner and this interaction is dissociated by calcium. Interacts with UBR2. Interacts with RIPK1. Interacts with stimulated TNFRSF10B; this interaction is followed by CASP8 proteolytic cleavage and activation. Generation of the subunits requires association with the death-inducing signaling complex (DISC), whereas additional processing is likely due to the autocatalytic activity of the activated protease. GZMB and CASP10 can be involved in these processing events. In terms of processing, (Microbial infection) Proteolytically cleaved by the cowpox virus CRMA death inhibitory protein. Post-translationally, phosphorylation on Ser-389 during mitosis by CDK1 inhibits activation by proteolysis and prevents apoptosis. This phosphorylation occurs in cancer cell lines, as well as in primary breast tissues and lymphocytes. As to expression, expressed in a wide variety of tissues. Highest expression in spleen, thymus, lung, liver and kidney. Lower expression in heart, brain, testis and skeletal muscle.

The protein localises to the cytoplasm. The protein resides in the nucleus. The catalysed reaction is Strict requirement for Asp at position P1 and has a preferred cleavage sequence of (Leu/Asp/Val)-Glu-Thr-Asp-|-(Gly/Ser/Ala).. Its activity is regulated as follows. CASP8 activity is restricted by RIPK1. With respect to regulation, (Microbial infection) Inhibited by baculovirus p35 protein P35. Its function is as follows. Thiol protease that plays a key role in programmed cell death by acting as a molecular switch for apoptosis, necroptosis and pyroptosis, and is required to prevent tissue damage during embryonic development and adulthood. Initiator protease that induces extrinsic apoptosis by mediating cleavage and activation of effector caspases responsible for FAS/CD95-mediated and TNFRSF1A-induced cell death. Cleaves and activates effector caspases CASP3, CASP4, CASP6, CASP7, CASP9 and CASP10. Binding to the adapter molecule FADD recruits it to either receptor FAS/CD95 or TNFRSF1A. The resulting aggregate called the death-inducing signaling complex (DISC) performs CASP8 proteolytic activation. The active dimeric enzyme is then liberated from the DISC and free to activate downstream apoptotic proteases. Proteolytic fragments of the N-terminal propeptide (termed CAP3, CAP5 and CAP6) are likely retained in the DISC. In addition to extrinsic apoptosis, also acts as a negative regulator of necroptosis: acts by cleaving RIPK1 at 'Asp-325', which is crucial to inhibit RIPK1 kinase activity, limiting TNF-induced apoptosis, necroptosis and inflammatory response. Also able to initiate pyroptosis by mediating cleavage and activation of gasdermin-C and -D (GSDMC and GSDMD, respectively): gasdermin cleavage promotes release of the N-terminal moiety that binds to membranes and forms pores, triggering pyroptosis. Initiates pyroptosis following inactivation of MAP3K7/TAK1. Also acts as a regulator of innate immunity by mediating cleavage and inactivation of N4BP1 downstream of TLR3 or TLR4, thereby promoting cytokine production. May participate in the Granzyme B (GZMB) cell death pathways. Cleaves PARP1 and PARP2. The protein is Caspase-8 of Mus musculus (Mouse).